Consider the following 384-residue polypeptide: Transcription factor 7 (384 aa).

Residues methionine 1–aspartate 16 are compositionally biased toward gly residues. Residues methionine 1–serine 59 form a CTNNB1-binding region. 3 disordered regions span residues methionine 1 to glutamate 88, proline 133 to valine 183, and serine 337 to leucine 384. The span at aspartate 35–glutamate 50 shows a compositional bias: basic and acidic residues. Residues alanine 62–alanine 78 are compositionally biased toward gly residues. A DNA-binding region (HMG box) is located at residues isoleucine 269–serine 337. The short motif at lysine 344 to arginine 348 is the Nuclear localization signal element. The span at lysine 352–glutamate 370 shows a compositional bias: basic and acidic residues. The span at alanine 374–leucine 384 shows a compositional bias: low complexity.

The protein belongs to the TCF/LEF family. In terms of assembly, binds the armadillo repeat of CTNNB1 and forms a stable complex. Interacts with TLE5, TLE1, TLE2, TLE3 and TLE4. Interacts with MLLT11. Long isoform interacts (via N-terminus) with SOX13; inhibits WNT-mediated transcriptional activity. Interacts with DAZAP2. Predominantly expressed in T-cells. Also detected in proliferating intestinal epithelial cells and in the basal epithelial cells of mammary gland epithelium.

It localises to the nucleus. Its function is as follows. Transcriptional activator involved in T-cell lymphocyte differentiation. Necessary for the survival of CD4(+) CD8(+) immature thymocytes. Isoforms lacking the N-terminal CTNNB1 binding domain cannot fulfill this role. Binds to the T-lymphocyte-specific enhancer element (5'-WWCAAAG-3') found in the promoter of the CD3E gene. Represses expression of the T-cell receptor gamma gene in alpha-beta T-cell lineages. Required for the development of natural killer receptor-positive lymphoid tissue inducer T-cells. TLE1, TLE2, TLE3 and TLE4 repress transactivation mediated by TCF7 and CTNNB1. May also act as feedback transcriptional repressor of CTNNB1 and TCF7L2 target genes. In Homo sapiens (Human), this protein is Transcription factor 7.